Reading from the N-terminus, the 375-residue chain is Hemolysin BL-binding component (375 aa).

Residues 1–31 (MIKKIPYKLLAVSTLLTITTANVVSPVATFA) form the signal peptide. The chain crosses the membrane as a helical span at residues 232-252 (FNVMKGAILGLPIIGGIIVGV).

In terms of assembly, composed of a binding component, B, and two lytic components, L1 and L2. All three subunits act synergically to cause hemolysis.

It localises to the secreted. The protein resides in the host cell membrane. Functionally, cytotoxic protein, part of the enterotoxin complex. Responsible for binding to erythrocytes. This enterotoxin is thought to be the cause of the diarrheal form of gastroenteritis caused by food-borne strains of B.cereus. The protein is Hemolysin BL-binding component (hblA) of Bacillus cereus.